The chain runs to 575 residues: uncharacterized protein (575 aa).

The protein resides in the cytoplasm. Its subcellular location is the cytoskeleton. The protein localises to the microtubule organizing center. It is found in the spindle pole body. This is an uncharacterized protein from Schizosaccharomyces pombe (strain 972 / ATCC 24843) (Fission yeast).